Reading from the N-terminus, the 188-residue chain is Elongation factor P (188 aa).

K34 is subject to N6-(3,6-diaminohexanoyl)-5-hydroxylysine.

The protein belongs to the elongation factor P family. May be beta-lysylated on the epsilon-amino group of Lys-34 by the combined action of EpmA and EpmB, and then hydroxylated on the C5 position of the same residue by EpmC (if this protein is present). Lysylation is critical for the stimulatory effect of EF-P on peptide-bond formation. The lysylation moiety may extend toward the peptidyltransferase center and stabilize the terminal 3-CCA end of the tRNA. Hydroxylation of the C5 position on Lys-34 may allow additional potential stabilizing hydrogen-bond interactions with the P-tRNA.

It is found in the cytoplasm. It functions in the pathway protein biosynthesis; polypeptide chain elongation. In terms of biological role, involved in peptide bond synthesis. Alleviates ribosome stalling that occurs when 3 or more consecutive Pro residues or the sequence PPG is present in a protein, possibly by augmenting the peptidyl transferase activity of the ribosome. Modification of Lys-34 is required for alleviation. The chain is Elongation factor P from Serratia proteamaculans (strain 568).